Reading from the N-terminus, the 728-residue chain is Polyribonucleotide nucleotidyltransferase (728 aa).

Residues D489 and D495 each contribute to the Mg(2+) site. The region spanning 556-615 is the KH domain; the sequence is PKIDTIKIDVDKIKIVIGKGGETIDKIIAETGVKIDIDEEGNVSIYSSDQDAINRAKEII. The region spanning 625-693 is the S1 motif domain; it reads DEVYHAKVVR…AKGRVDASMK (69 aa). The disordered stretch occupies residues 691–728; sequence SMKALLPRPPKPEKSDKHHDKGHPHKKHEEAPLTQTEE. Over residues 700 to 709 the composition is skewed to basic and acidic residues; that stretch reads PKPEKSDKHH.

It belongs to the polyribonucleotide nucleotidyltransferase family. The cofactor is Mg(2+).

It localises to the cytoplasm. The enzyme catalyses RNA(n+1) + phosphate = RNA(n) + a ribonucleoside 5'-diphosphate. Involved in mRNA degradation. Catalyzes the phosphorolysis of single-stranded polyribonucleotides processively in the 3'- to 5'-direction. In Streptococcus gordonii (strain Challis / ATCC 35105 / BCRC 15272 / CH1 / DL1 / V288), this protein is Polyribonucleotide nucleotidyltransferase.